Here is a 598-residue protein sequence, read N- to C-terminus: Transcription factor cpaR (598 aa).

Positions 22–51 (CNGCRERKRRCVRRKRELPCLSCQAENRPC) form a DNA-binding region, zn(2)-C6 fungal-type.

It localises to the nucleus. Functionally, transcription factor; part of the gene cluster that mediates the biosynthesis of the fungal neurotoxin cyclopiazonic acid (CPA), a nanomolar inhibitor of Ca(2+)-ATPase with a unique pentacyclic indole tetramic acid scaffold. The protein is Transcription factor cpaR of Aspergillus oryzae (Yellow koji mold).